Consider the following 179-residue polypeptide: ATP synthase subunit delta (179 aa).

It belongs to the ATPase delta chain family. In terms of assembly, F-type ATPases have 2 components, F(1) - the catalytic core - and F(0) - the membrane proton channel. F(1) has five subunits: alpha(3), beta(3), gamma(1), delta(1), epsilon(1). F(0) has three main subunits: a(1), b(2) and c(10-14). The alpha and beta chains form an alternating ring which encloses part of the gamma chain. F(1) is attached to F(0) by a central stalk formed by the gamma and epsilon chains, while a peripheral stalk is formed by the delta and b chains.

The protein localises to the cell membrane. F(1)F(0) ATP synthase produces ATP from ADP in the presence of a proton or sodium gradient. F-type ATPases consist of two structural domains, F(1) containing the extramembraneous catalytic core and F(0) containing the membrane proton channel, linked together by a central stalk and a peripheral stalk. During catalysis, ATP synthesis in the catalytic domain of F(1) is coupled via a rotary mechanism of the central stalk subunits to proton translocation. Its function is as follows. This protein is part of the stalk that links CF(0) to CF(1). It either transmits conformational changes from CF(0) to CF(1) or is implicated in proton conduction. The protein is ATP synthase subunit delta of Clostridium acetobutylicum (strain ATCC 824 / DSM 792 / JCM 1419 / IAM 19013 / LMG 5710 / NBRC 13948 / NRRL B-527 / VKM B-1787 / 2291 / W).